A 231-amino-acid chain; its full sequence is Endo-1,4-beta-xylanase 4 (231 aa).

The first 18 residues, 1–18, serve as a signal peptide directing secretion; that stretch reads MVSFTTILVAATAALVAA. One can recognise a GH11 domain in the interval 42 to 230; the sequence is GGTPSSTGTH…SSGSSTVTIQ (189 aa). N-linked (GlcNAc...) asparagine glycosylation occurs at Asn99. Catalysis depends on Glu126, which acts as the Nucleophile. The active-site Proton donor is Glu217.

This sequence belongs to the glycosyl hydrolase 11 (cellulase G) family.

Its subcellular location is the secreted. The enzyme catalyses Endohydrolysis of (1-&gt;4)-beta-D-xylosidic linkages in xylans.. It functions in the pathway glycan degradation; xylan degradation. Functionally, endo-1,4-beta-xylanase involved in the hydrolysis of xylan, a major structural heterogeneous polysaccharide found in plant biomass representing the second most abundant polysaccharide in the biosphere, after cellulose. This Pyricularia grisea (Crabgrass-specific blast fungus) protein is Endo-1,4-beta-xylanase 4 (XYL4).